The chain runs to 423 residues: Adenylosuccinate synthetase (423 aa).

Aspartate 12 (proton acceptor) is an active-site residue. Aspartate 12 and glycine 39 together coordinate Mg(2+). IMP-binding positions include 37–40 (NAGH), threonine 129, arginine 143, asparagine 221, threonine 236, and arginine 300. A GTP-binding site is contributed by 39–41 (GHS). Residue histidine 40 is the Proton donor of the active site. A substrate-binding site is contributed by 296-302 (VSTGRKR). GTP is bound by residues arginine 302, 328 to 330 (KLD), and 412 to 414 (GTG).

Belongs to the adenylosuccinate synthetase family. Homodimer. Mg(2+) serves as cofactor.

It localises to the cytoplasm. The enzyme catalyses IMP + L-aspartate + GTP = N(6)-(1,2-dicarboxyethyl)-AMP + GDP + phosphate + 2 H(+). Its pathway is purine metabolism; AMP biosynthesis via de novo pathway; AMP from IMP: step 1/2. In terms of biological role, plays an important role in the de novo pathway and in the salvage pathway of purine nucleotide biosynthesis. Catalyzes the first committed step in the biosynthesis of AMP from IMP. This chain is Adenylosuccinate synthetase, found in Pyricularia oryzae (strain 70-15 / ATCC MYA-4617 / FGSC 8958) (Rice blast fungus).